A 130-amino-acid chain; its full sequence is Protein ApaG (130 aa).

An ApaG domain is found at 3 to 127; it reads RATTRKIQVT…FSLDVPHMAR (125 aa).

This Azorhizobium caulinodans (strain ATCC 43989 / DSM 5975 / JCM 20966 / LMG 6465 / NBRC 14845 / NCIMB 13405 / ORS 571) protein is Protein ApaG.